Reading from the N-terminus, the 351-residue chain is (S)-coclaurine N-methyltransferase (351 aa).

S-adenosyl-L-methionine is bound by residues 91–92 (QS), 126–134 (VLDLGCGLG), 130–132 (GCG), and 153–158 (TSSVEQ). Residue Cys-326 is part of the active site.

It belongs to the CFA/CMAS family. As to expression, expressed in roots, stems, flower buds and at lower levels, in leaves. Restricted to sieve elements of the phloem adjacent or proximal to laticifers.

The protein resides in the cytoplasm. The enzyme catalyses (S)-coclaurine + S-adenosyl-L-methionine = (S)-N-methylcoclaurine + S-adenosyl-L-homocysteine + H(+). It functions in the pathway alkaloid biosynthesis; (S)-reticuline biosynthesis; (S)-reticuline from (S)-norcoclaurine: step 2/4. Its function is as follows. Involved in the biosynthesis of benzylisoquinoline alkaloids. N-methyltransferase methylating (S)-coclaurine. 4'-O-methylcoclaurine and norlaudanine can also be used as substrates. The sequence is that of (S)-coclaurine N-methyltransferase from Papaver somniferum (Opium poppy).